Consider the following 889-residue polypeptide: Alanine--tRNA ligase (889 aa).

Zn(2+) is bound by residues His-574, His-578, Cys-676, and His-680.

The protein belongs to the class-II aminoacyl-tRNA synthetase family. It depends on Zn(2+) as a cofactor.

The protein localises to the cytoplasm. It catalyses the reaction tRNA(Ala) + L-alanine + ATP = L-alanyl-tRNA(Ala) + AMP + diphosphate. Its function is as follows. Catalyzes the attachment of alanine to tRNA(Ala) in a two-step reaction: alanine is first activated by ATP to form Ala-AMP and then transferred to the acceptor end of tRNA(Ala). Also edits incorrectly charged Ser-tRNA(Ala) and Gly-tRNA(Ala) via its editing domain. The sequence is that of Alanine--tRNA ligase from Thermobifida fusca (strain YX).